Consider the following 274-residue polypeptide: 2,3,4,5-tetrahydropyridine-2,6-dicarboxylate N-succinyltransferase (274 aa).

Arg106 and Asp143 together coordinate substrate.

It belongs to the transferase hexapeptide repeat family. As to quaternary structure, homotrimer.

It localises to the cytoplasm. It catalyses the reaction (S)-2,3,4,5-tetrahydrodipicolinate + succinyl-CoA + H2O = (S)-2-succinylamino-6-oxoheptanedioate + CoA. It functions in the pathway amino-acid biosynthesis; L-lysine biosynthesis via DAP pathway; LL-2,6-diaminopimelate from (S)-tetrahydrodipicolinate (succinylase route): step 1/3. The sequence is that of 2,3,4,5-tetrahydropyridine-2,6-dicarboxylate N-succinyltransferase from Paracidovorax citrulli (strain AAC00-1) (Acidovorax citrulli).